A 644-amino-acid polypeptide reads, in one-letter code: Zinc transporter ZIP4 (644 aa).

The signal sequence occupies residues 1-27; the sequence is MAILAWLEPRPLLAVLVLVLTMRMAQP. Topologically, residues 28–323 are extracellular; it reads AHLLTLLSSG…QNQLSQAEKY (296 aa). Intrachain disulfides connect cysteine 59–cysteine 64, cysteine 67–cysteine 103, and cysteine 153–cysteine 188. Positions 231–259 are disordered; that stretch reads TETHSDHHHQEKRVNRQGPTPLTAPNSSS. A compositionally biased stretch (basic and acidic residues) spans 233–244; it reads THSDHHHQEKRV. Over residues 247–259 the composition is skewed to polar residues; it reads QGPTPLTAPNSSS. Cysteines 266 and 305 form a disulfide. Residues 324 to 344 form a helical membrane-spanning segment; sequence LYGSLATLLICLCSTFGLLLL. The Cytoplasmic portion of the chain corresponds to 345–355; it reads TCAACSTAAHY. Residues 356 to 376 traverse the membrane as a helical segment; the sequence is VIQTFLGMAVGALTGDALLHL. The Extracellular portion of the chain corresponds to 377–404; sequence TPKVLGLHQHGGDSEHRADSHGPQTTWR. Residues 405 to 425 form a helical membrane-spanning segment; sequence LVVALSGLYVFFLFEKLCDLL. At 426 to 495 the chain is on the cytoplasmic side; it reads LPQDPEDRKG…KSPELRLLPY (70 aa). The short motif at 449–451 is the Essential for SLC39A4 endocytosis element; sequence LQL. Basic and acidic residues predominate over residues 456 to 467; it reads LRPPKQPHEGSR. The tract at residues 456–484 is disordered; it reads LRPPKQPHEGSRADLVAEESPELLSPEPR. Residues 496–515 form a helical membrane-spanning segment; sequence MITLGDGLHNFADGLAVGAA. Residues histidine 504, asparagine 505, and aspartate 508 each contribute to the Zn(2+) site. The Extracellular segment spans residues 516-523; the sequence is FASSWKTG. A helical transmembrane segment spans residues 524–550; the sequence is LATSLAVFCHEVPHELGDFAALLHAGL. Zn(2+) is bound by residues histidine 533, glutamate 534, and histidine 537. Topologically, residues 551–555 are cytoplasmic; the sequence is PVSRA. Residues 556–576 traverse the membrane as a helical segment; that stretch reads LLLNLASGLTAFAGLYVALAL. Residues 577–583 are Extracellular-facing; the sequence is GVGEESE. Residues 584-604 traverse the membrane as a helical segment; the sequence is SWTLAVAIGLFLYVALCDMLP. Topologically, residues 605–614 are cytoplasmic; it reads AMLNVRDPRP. Residues 615–635 form a helical membrane-spanning segment; that stretch reads WLLFLLHNVGLLGGWAVLLLL. The Extracellular portion of the chain corresponds to 636 to 644; that stretch reads SLYEDSIAL.

This sequence belongs to the ZIP transporter (TC 2.A.5) family. As to quaternary structure, homodimer. Post-translationally, the extracellular N-terminal ectodomain is cleaved when cells are Zn(2+) deficient, N-terminally cleaved SLC39A4 is internalized at a faster rate. In terms of processing, under excess Zn(2+) conditions, SLC39A4 on the cell surface is rapidly endocytosed, ubiquitinated and degraded. Glycosylated.

Its subcellular location is the cell membrane. It is found in the recycling endosome membrane. The protein resides in the apical cell membrane. The enzyme catalyses Zn(2+)(in) = Zn(2+)(out). Its function is as follows. Selective transporter that mediates the uptake of Zn(2+). Plays an essential role for dietary zinc uptake from small intestine. The Zn(2+) uniporter activity is regulated by zinc availability. Also exhibits polyspecific binding and transport of Cu(2+), Cd(2+) and possibly Ni(2+) but at higher concentrations. This Pteropus alecto (Black flying fox) protein is Zinc transporter ZIP4.